Here is a 617-residue protein sequence, read N- to C-terminus: E3 ubiquitin-protein ligase synoviolin (617 aa).

The Cytoplasmic portion of the chain corresponds to 1–4; that stretch reads MFRT. The segment at 1–84 is necessary and sufficient for SEL1L interaction; that stretch reads MFRTAVMMAA…EHLLERSWYA (84 aa). Residues 1 to 251 are involved in FAM8A1 interaction; the sequence is MFRTAVMMAA…LFAIRPMYLA (251 aa). The chain crosses the membrane as a helical span at residues 5–25; the sequence is AVMMAASLALTGAVVAHAYYL. Residues 26–41 lie on the Lumenal side of the membrane; sequence KHQFYPTVVYLTKSSP. Residues 42–62 traverse the membrane as a helical segment; it reads SMAVLYIQAFVLVFLLGKVMG. Over 63 to 98 the chain is Cytoplasmic; sequence KVFFGQLRAAEMEHLLERSWYAVTETCLAFTVFRDD. The helical transmembrane segment at 99 to 119 threads the bilayer; that stretch reads FSPRFVALFTLLLFLKCFHWL. The Lumenal segment spans residues 120 to 140; the sequence is AEDRVDFMERSPNISWLFHCR. A helical membrane pass occupies residues 141 to 161; the sequence is IVSLMFLLGILDFLFVSHAYH. Residues 162-169 lie on the Cytoplasmic side of the membrane; sequence SILTRGAS. The chain crosses the membrane as a helical span at residues 170–190; it reads VQLVFGFEYAILMTMVLTIFI. Residues 191-224 are Lumenal-facing; that stretch reads KYVLHSVDLQSENPWDNKAVYMLYTELFTGFIKV. A helical membrane pass occupies residues 225–245; it reads LLYMAFMTIMIKVHTFPLFAI. The interval 236–270 is interaction with p53/TP53; that stretch reads KVHTFPLFAIRPMYLAMRQFKKAVTDAIMSRRAIR. Over 246-617 the chain is Cytoplasmic; that stretch reads RPMYLAMRQF…LQKLESPVAH (372 aa). Zn(2+) is bound by residues Cys-291, Cys-294, Cys-307, His-309, His-312, Cys-315, Cys-326, and Cys-329. An RING-type; atypical zinc finger spans residues 291–330; sequence CIICREEMVTGAKRLPCNHIFHTSCLRSWFQRQQTCPTCR. Disordered stretches follow at residues 337–375, 393–453, and 535–617; these read SLPA…GLLP, PVPP…PAPG, and RPAT…PVAH. Residues 341–375 show a composition bias toward pro residues; sequence QSPPPPEPADQGPPPAPHPPPLLPQPPNFPQGLLP. Residues 417–451 show a composition bias toward low complexity; it reads PSGAATTTAAGTSATAASATASGPGSGSAPEAGPA. Residues 480–535 are HAF-H domain; necessary to form higher-order Hrd1 complexes; it reads GFAGLTPEELRALEGHERQHLEARLQSLRNIHTLLDAAMLQINQYLTVLASLGPPR. The span at 537 to 569 shows a compositional bias: low complexity; it reads ATSVNSTEETATTVVAAASSTSIPSSEATTPTP. The span at 591-600 shows a compositional bias: acidic residues; sequence EMPEDGEPDA. Ser-613 carries the phosphoserine modification.

Belongs to the HRD1 family. In terms of assembly, homodimer. Interacts with p53/TP53. Interacts with HTT. Component of the HRD1 complex, which comprises at least SYNV1/HRD1, DERL1/2, FAM8A1, HERPUD1/HERP, OS9, SEL1L and UBE2J1. FAM8A1 is stabilized by interaction with SYNV1, which prevents its proteasomal degradation. OS9 and UBE2J1 recruitment to the complex may be mediated by SEL1L. SYNV1 assembles with SEL1L and FAM8A1 through its transmembrane domains, but interaction with its cytoplasmic domain is required to confer stability to FAM8A1 and enhance recruitment of HERPUD1. The HRD1 complex also associates with VIMP and may transfer misfolded proteins from the endoplasmic reticulum to VCP. May form a complex with ERLEC1, HSPA5, OS9 and SEL1L. Interacts with VCP. Interacts with UBXN6. Interacts with BAG6. Interacts with NFE2L1. Interacts (via N-terminus) with components of the pre-B cell receptor, including IGLL1 and VPREB1. Interacts with CREB3L3; this interaction leads to CREB3L3 ubiquitination and proteasomal degradation. Not N-glycosylated. Post-translationally, auto-ubiquitinated. Deubiquitinated by USP19. Ubiquitously expressed, with highest levels in liver and kidney (at protein level). Up-regulated in synovial tissues from patients with rheumatoid arthritis (at protein level).

It is found in the endoplasmic reticulum membrane. The catalysed reaction is S-ubiquitinyl-[E2 ubiquitin-conjugating enzyme]-L-cysteine + [acceptor protein]-L-lysine = [E2 ubiquitin-conjugating enzyme]-L-cysteine + N(6)-ubiquitinyl-[acceptor protein]-L-lysine.. The protein operates within protein modification; protein ubiquitination. In terms of biological role, E3 ubiquitin-protein ligase which accepts ubiquitin specifically from endoplasmic reticulum-associated UBC7 E2 ligase and transfers it to substrates, promoting their degradation. Component of the endoplasmic reticulum quality control (ERQC) system also called ER-associated degradation (ERAD) involved in ubiquitin-dependent degradation of misfolded endoplasmic reticulum proteins. Also promotes the degradation of normal but naturally short-lived proteins such as SGK. Protects cells from ER stress-induced apoptosis. Protects neurons from apoptosis induced by polyglutamine-expanded huntingtin (HTT) or unfolded GPR37 by promoting their degradation. Sequesters p53/TP53 in the cytoplasm and promotes its degradation, thereby negatively regulating its biological function in transcription, cell cycle regulation and apoptosis. Mediates the ubiquitination and subsequent degradation of cytoplasmic NFE2L1. During the early stage of B cell development, required for degradation of the pre-B cell receptor (pre-BCR) complex, hence supporting further differentiation into mature B cells. This Homo sapiens (Human) protein is E3 ubiquitin-protein ligase synoviolin.